Reading from the N-terminus, the 431-residue chain is MANSC domain-containing protein 1 (431 aa).

A signal peptide spans 1 to 26 (MFFGGKGSLTYTLVIICFLTLRLAAS). Residues 27 to 385 (QNCLNKSLED…QYGLPFEKWL (359 aa)) are Extracellular-facing. Asn-31 carries N-linked (GlcNAc...) asparagine glycosylation. Residues 33–117 (SLEDVVIDIQ…LKPAKGLRSY (85 aa)) form the MANSC domain. Residues Asn-222 and Asn-251 are each glycosylated (N-linked (GlcNAc...) asparagine). The disordered stretch occupies residues 236–279 (HTTSATPKPAIRLPTNASVTPSGTSQPQLATTSPPVTTVTSQPP). Residues 250 to 265 (TNASVTPSGTSQPQLA) show a composition bias toward polar residues. Residues 266–279 (TTSPPVTTVTSQPP) are compositionally biased toward low complexity. N-linked (GlcNAc...) asparagine glycosylation is found at Asn-327 and Asn-352. The tract at residues 352-372 (NKTASWEGREASPGRSSQGNV) is disordered. The helical transmembrane segment at 386-408 (LIGSLLFGVLFLVIGLVLLGRIL) threads the bilayer. At 409 to 431 (SESLRRKRYSRLDYLINGIYVDI) the chain is on the cytoplasmic side.

The protein resides in the membrane. The protein is MANSC domain-containing protein 1 (MANSC1) of Macaca fascicularis (Crab-eating macaque).